The following is a 76-amino-acid chain: Virulence-associated protein VagC (76 aa).

The region spanning 4 to 45 (VSIFKNGNNRAIRLPRDLDFEGVSELEIVREGDSIILRPVRP) is the SpoVT-AbrB domain.

The protein belongs to the VapB family.

The polypeptide is Virulence-associated protein VagC (vagC) (Salmonella dublin).